The following is a 689-amino-acid chain: DNA-directed RNA polymerase subunit beta' (689 aa).

Residues C76, C78, C94, and C97 each contribute to the Zn(2+) site. Residues D496, D498, and D500 each coordinate Mg(2+).

It belongs to the RNA polymerase beta' chain family. RpoC1 subfamily. In terms of assembly, in plastids the minimal PEP RNA polymerase catalytic core is composed of four subunits: alpha, beta, beta', and beta''. When a (nuclear-encoded) sigma factor is associated with the core the holoenzyme is formed, which can initiate transcription. It depends on Mg(2+) as a cofactor. Requires Zn(2+) as cofactor.

It localises to the plastid. The protein resides in the chloroplast. It catalyses the reaction RNA(n) + a ribonucleoside 5'-triphosphate = RNA(n+1) + diphosphate. DNA-dependent RNA polymerase catalyzes the transcription of DNA into RNA using the four ribonucleoside triphosphates as substrates. This Illicium oligandrum (Star anise) protein is DNA-directed RNA polymerase subunit beta'.